The sequence spans 203 residues: Histidine biosynthesis bifunctional protein HisIE (203 aa).

The tract at residues 1 to 114 is phosphoribosyl-AMP cyclohydrolase; the sequence is MLTEQQRREL…FGDTAHQWLF (114 aa). The interval 115–203 is phosphoribosyl-ATP pyrophosphohydrolase; that stretch reads LYQLEQLLAE…VIENLRKRHQ (89 aa).

It in the N-terminal section; belongs to the PRA-CH family. The protein in the C-terminal section; belongs to the PRA-PH family.

The protein resides in the cytoplasm. It carries out the reaction 1-(5-phospho-beta-D-ribosyl)-ATP + H2O = 1-(5-phospho-beta-D-ribosyl)-5'-AMP + diphosphate + H(+). The enzyme catalyses 1-(5-phospho-beta-D-ribosyl)-5'-AMP + H2O = 1-(5-phospho-beta-D-ribosyl)-5-[(5-phospho-beta-D-ribosylamino)methylideneamino]imidazole-4-carboxamide. It functions in the pathway amino-acid biosynthesis; L-histidine biosynthesis; L-histidine from 5-phospho-alpha-D-ribose 1-diphosphate: step 2/9. Its pathway is amino-acid biosynthesis; L-histidine biosynthesis; L-histidine from 5-phospho-alpha-D-ribose 1-diphosphate: step 3/9. The protein is Histidine biosynthesis bifunctional protein HisIE (hisI) of Escherichia coli (strain K12).